The sequence spans 211 residues: Endonuclease III (211 aa).

In terms of domain architecture, HhH spans 108-127; sequence RAALEALPGVGRKTANVVLN. [4Fe-4S] cluster-binding residues include cysteine 187, cysteine 194, cysteine 197, and cysteine 203.

Belongs to the Nth/MutY family. [4Fe-4S] cluster serves as cofactor.

It carries out the reaction 2'-deoxyribonucleotide-(2'-deoxyribose 5'-phosphate)-2'-deoxyribonucleotide-DNA = a 3'-end 2'-deoxyribonucleotide-(2,3-dehydro-2,3-deoxyribose 5'-phosphate)-DNA + a 5'-end 5'-phospho-2'-deoxyribonucleoside-DNA + H(+). Functionally, DNA repair enzyme that has both DNA N-glycosylase activity and AP-lyase activity. The DNA N-glycosylase activity releases various damaged pyrimidines from DNA by cleaving the N-glycosidic bond, leaving an AP (apurinic/apyrimidinic) site. The AP-lyase activity cleaves the phosphodiester bond 3' to the AP site by a beta-elimination, leaving a 3'-terminal unsaturated sugar and a product with a terminal 5'-phosphate. The protein is Endonuclease III of Escherichia coli O6:H1 (strain CFT073 / ATCC 700928 / UPEC).